A 550-amino-acid polypeptide reads, in one-letter code: Chaperonin GroEL (550 aa).

Residues T30 to P33, K51, D87 to T91, G415, and D495 each bind ATP.

Belongs to the chaperonin (HSP60) family. As to quaternary structure, forms a cylinder of 14 subunits composed of two heptameric rings stacked back-to-back. Interacts with the co-chaperonin GroES.

It is found in the cytoplasm. It catalyses the reaction ATP + H2O + a folded polypeptide = ADP + phosphate + an unfolded polypeptide.. Functionally, together with its co-chaperonin GroES, plays an essential role in assisting protein folding. The GroEL-GroES system forms a nano-cage that allows encapsulation of the non-native substrate proteins and provides a physical environment optimized to promote and accelerate protein folding. The polypeptide is Chaperonin GroEL (Dechloromonas aromatica (strain RCB)).